The sequence spans 447 residues: Signal recognition particle 54 kDa protein (447 aa).

Residues 105–112 (GVQGSGKT), 187–191 (DTAGR), and 247–250 (TKMD) contribute to the GTP site.

The protein belongs to the GTP-binding SRP family. SRP54 subfamily. As to quaternary structure, part of the signal recognition particle protein translocation system, which is composed of SRP and FtsY. Archaeal SRP consists of a 7S RNA molecule of 300 nucleotides and two protein subunits: SRP54 and SRP19.

The protein resides in the cytoplasm. It catalyses the reaction GTP + H2O = GDP + phosphate + H(+). In terms of biological role, involved in targeting and insertion of nascent membrane proteins into the cytoplasmic membrane. Binds to the hydrophobic signal sequence of the ribosome-nascent chain (RNC) as it emerges from the ribosomes. The SRP-RNC complex is then targeted to the cytoplasmic membrane where it interacts with the SRP receptor FtsY. This is Signal recognition particle 54 kDa protein from Hyperthermus butylicus (strain DSM 5456 / JCM 9403 / PLM1-5).